A 123-amino-acid polypeptide reads, in one-letter code: Large ribosomal subunit protein uL14 (123 aa).

Belongs to the universal ribosomal protein uL14 family. In terms of assembly, part of the 50S ribosomal subunit. Forms a cluster with proteins L3 and L19. In the 70S ribosome, L14 and L19 interact and together make contacts with the 16S rRNA in bridges B5 and B8.

Functionally, binds to 23S rRNA. Forms part of two intersubunit bridges in the 70S ribosome. The sequence is that of Large ribosomal subunit protein uL14 from Yersinia pestis bv. Antiqua (strain Antiqua).